The sequence spans 540 residues: Chaperonin GroEL 2 (540 aa).

ATP contacts are provided by residues 29–32 (TLGP), 86–90 (DGTTT), Gly-413, 476–478 (NAA), and Asp-492.

It belongs to the chaperonin (HSP60) family. As to quaternary structure, forms a cylinder of 14 subunits composed of two heptameric rings stacked back-to-back. Interacts with the co-chaperonin GroES.

The protein localises to the cytoplasm. The catalysed reaction is ATP + H2O + a folded polypeptide = ADP + phosphate + an unfolded polypeptide.. Functionally, together with its co-chaperonin GroES, plays an essential role in assisting protein folding. The GroEL-GroES system forms a nano-cage that allows encapsulation of the non-native substrate proteins and provides a physical environment optimized to promote and accelerate protein folding. This is Chaperonin GroEL 2 from Streptomyces albus G.